Reading from the N-terminus, the 366-residue chain is MTQIIIAGAVGLLVSIFVTPVLIRRFSAEGLGQEIREDGPKSHLRKRGTPTMGGIAILIGITVAYAVTGIVGQVTGTGGLTASGLLVLGLTLALGGLGFADDFIKLYMGRNLGLNKKAKLIGQLAISLIFGALILLFPNADGLTPGSSHLSFLRDLPTVDLAIGPKAVGIAIFLLFIYILISAWSNAVNLTDGLDGLAAGSTAIVMGTYTVITFWQFRNSCSAGAQPGCYDVRDPLDLAILAAAGLGACLGFLWWNAAPAKIFMGDTGSLALGGLVAGLSVASRTELLMIIVGALFVLEAASVVIQVAGYRTKKIRIFRMAPFHHHFENGGWAETTVVIRFWLIAAVAALIGASIFYGEWLSLTGV.

10 helical membrane-spanning segments follow: residues 3 to 23 (QIII…PVLI), 52 to 72 (MGGI…GIVG), 80 to 100 (LTAS…LGFA), 120 to 140 (LIGQ…FPNA), 161 to 181 (LAIG…YILI), 197 to 217 (LAAG…FWQF), 238 to 258 (LAIL…WNAA), 262 to 282 (IFMG…LSVA), 287 to 307 (LLMI…VIQV), and 341 to 361 (FWLI…GEWL).

This sequence belongs to the glycosyltransferase 4 family. MraY subfamily. Mg(2+) serves as cofactor.

It is found in the cell membrane. The catalysed reaction is UDP-N-acetyl-alpha-D-muramoyl-L-alanyl-gamma-D-glutamyl-meso-2,6-diaminopimeloyl-D-alanyl-D-alanine + di-trans,octa-cis-undecaprenyl phosphate = di-trans,octa-cis-undecaprenyl diphospho-N-acetyl-alpha-D-muramoyl-L-alanyl-D-glutamyl-meso-2,6-diaminopimeloyl-D-alanyl-D-alanine + UMP. The protein operates within cell wall biogenesis; peptidoglycan biosynthesis. Catalyzes the initial step of the lipid cycle reactions in the biosynthesis of the cell wall peptidoglycan: transfers peptidoglycan precursor phospho-MurNAc-pentapeptide from UDP-MurNAc-pentapeptide onto the lipid carrier undecaprenyl phosphate, yielding undecaprenyl-pyrophosphoryl-MurNAc-pentapeptide, known as lipid I. This chain is Phospho-N-acetylmuramoyl-pentapeptide-transferase, found in Corynebacterium diphtheriae (strain ATCC 700971 / NCTC 13129 / Biotype gravis).